A 911-amino-acid chain; its full sequence is MMKPASLQGFSSHASSSIYSDVRRPATTPSKMAAFSALSLCPYTFTFRQSSRIKSTVSCSVTSAPASGTSSSSKTPRRRSGRLEGVGKSMEDSVKRKMEQFYEGTDGPPLRILPIGGLGEIGMNCMLVGNYDRYILIDAGIMFPDYDEPGIQKIMPDTGFIRRWKHKIEAVVITHGHEDHIGALPWVIPALDPNTPIFASSFTMELIKKRLKEHGIFVQSRLKTFSTRRRFMAGPFEIEPITVTHSIPDCSGLFLRCADGNILHTGDWKIDEAPLDGKVFDREALEELSKEGVTLMMSDSTNVLSPGRTISEKVVADALVRNVMAAKGRVITTQFASNIHRLGSIKAAADITGRKLVFVGMSLRTYLEAAWRDGKAPIDPSSLIKVEDIEAYAPKDLLIVTTGSQAEPRAALNLASYGSSHAFKLTKEDIILYSAKVIPGNESRVMKMMNRIADIGPNIIMGKNEMLHTSGHAYRGELEEVLKIVKPQHFLPIHGELLFLKEHELLGKSTGIRHTTVIKNGEMLGVSHLRNRRVLSNGFSSLGRENLQLMYSDGDKAFGTSSELCIDERLRISSDGIIVLSMEIMRPGVSENTLKGKIRITTRCMWLDKGRLLDALHKAAHAALSSCPVTCPLSHMERTVSEVLRKIVRKYSGKRPEVIAIATENPMAVRADEVSARLSGDPSVGSGVAALRKVVEGNDKRSRAKKAPSQEASPKEVDRTLEDDIIDSARLLAEEETAASTYTEEVDTPVGSSSEESDDFWKSFINPSSSPSPSETENMNKVADTEPKAEGKENSRDDDELADASDSETKSSPKRVRKNKWKPEEIKKVIRMRGELHSRFQVVKGRMALWEEISSNLSAEGINRSPGQCKSLWASLIQKYEESKADERSKTSWPHFEDMNNILSELGTPAS.

Residues 1 to 70 (MMKPASLQGF…VTSAPASGTS (70 aa)) constitute a chloroplast transit peptide. The disordered stretch occupies residues 58 to 90 (SCSVTSAPASGTSSSSKTPRRRSGRLEGVGKSM). Low complexity predominate over residues 63 to 74 (SAPASGTSSSSK). The Zn(2+) site is built by H175, H177, D179, H180, H245, and D267. Residues 336 to 338 (ASN) and 468 to 472 (HTSGH) each bind substrate. A Zn(2+)-binding site is contributed by H494. 2 disordered regions span residues 695 to 723 (VEGNDKRSRAKKAPSQEASPKEVDRTLED) and 735 to 824 (EETA…WKPE). Composition is skewed to basic and acidic residues over residues 713-722 (SPKEVDRTLE) and 783-795 (ADTEPKAEGKENS). Residues 796 to 806 (RDDDELADASD) are compositionally biased toward acidic residues. Residues 813 to 877 (PKRVRKNKWK…QCKSLWASLI (65 aa)) form the Myb-like domain.

It belongs to the metallo-beta-lactamase superfamily. RNA-metabolizing metallo-beta-lactamase-like family. Bacterial RNase J subfamily. In terms of assembly, homodimer. May be a subunit of the RNA degradosome. The cofactor is Zn(2+). Moslty expressed in inflorescences, seedlings, leaves, flowers and flower buds, and, to a lower extent, in stems, siliques and roots.

It localises to the plastid. Its subcellular location is the chloroplast. Functionally, essential protein required during embryogenesis, especially in initiating and maintaining the organization of shoot apical meristems (SAMs), cotyledons, and hypocotyls. Involved in auxin-mediated pathways during embryogenesis. RNase that has both endonuclease and 5'-3' exonuclease activities. Involved in RNA surveillance to prevent overaccumulation of antisense RNA. Probably involved in maturation of rRNA and in some organisms also mRNA maturation and/or decay. This chain is Ribonuclease J, found in Arabidopsis thaliana (Mouse-ear cress).